A 74-amino-acid polypeptide reads, in one-letter code: Large ribosomal subunit protein bL27c (74 aa).

Belongs to the bacterial ribosomal protein bL27 family.

It localises to the plastid. It is found in the chloroplast. In Calyptrosphaera sphaeroidea, this protein is Large ribosomal subunit protein bL27c (rpl27).